The sequence spans 103 residues: Small ribosomal subunit protein uS10 (103 aa).

This sequence belongs to the universal ribosomal protein uS10 family. Part of the 30S ribosomal subunit.

In terms of biological role, involved in the binding of tRNA to the ribosomes. The polypeptide is Small ribosomal subunit protein uS10 (Persephonella marina (strain DSM 14350 / EX-H1)).